A 94-amino-acid chain; its full sequence is Conotoxin Cal22a (94 aa).

The first 24 residues, 1 to 24 (MMSTKGITLFLCLLLLALATSVNG), serve as a signal peptide directing secretion. Residues 25–44 (GQGTRRSRMTRALHGGRPSA) constitute a propeptide that is removed on maturation.

In terms of processing, contains 4 disulfide bonds. Expressed by the venom duct.

It is found in the secreted. Its function is as follows. Probable neurotoxin with unknown target. Possibly targets ion channels. The sequence is that of Conotoxin Cal22a from Californiconus californicus (California cone).